We begin with the raw amino-acid sequence, 357 residues long: Phosphoribosylformylglycinamidine cyclo-ligase (357 aa).

It belongs to the AIR synthase family.

Its subcellular location is the cytoplasm. The enzyme catalyses 2-formamido-N(1)-(5-O-phospho-beta-D-ribosyl)acetamidine + ATP = 5-amino-1-(5-phospho-beta-D-ribosyl)imidazole + ADP + phosphate + H(+). The protein operates within purine metabolism; IMP biosynthesis via de novo pathway; 5-amino-1-(5-phospho-D-ribosyl)imidazole from N(2)-formyl-N(1)-(5-phospho-D-ribosyl)glycinamide: step 2/2. The chain is Phosphoribosylformylglycinamidine cyclo-ligase from Rhizobium rhizogenes (strain K84 / ATCC BAA-868) (Agrobacterium radiobacter).